Consider the following 202-residue polypeptide: Holliday junction branch migration complex subunit RuvA (202 aa).

The domain I stretch occupies residues 1-64 (MIGRLRGSLA…EDAHLLYGFY (64 aa)). Positions 65-143 (EKRERELFRE…AWEALPGTFT (79 aa)) are domain II. Residues 144 to 153 (LVSNGPNQAE) form a flexible linker region. Positions 154–202 (PVASAESDAVSALISLGYKPQEASKAVSAIKEKDLSSADLIRRALKGMG) are domain III.

Belongs to the RuvA family. As to quaternary structure, homotetramer. Forms an RuvA(8)-RuvB(12)-Holliday junction (HJ) complex. HJ DNA is sandwiched between 2 RuvA tetramers; dsDNA enters through RuvA and exits via RuvB. An RuvB hexamer assembles on each DNA strand where it exits the tetramer. Each RuvB hexamer is contacted by two RuvA subunits (via domain III) on 2 adjacent RuvB subunits; this complex drives branch migration. In the full resolvosome a probable DNA-RuvA(4)-RuvB(12)-RuvC(2) complex forms which resolves the HJ.

It localises to the cytoplasm. Functionally, the RuvA-RuvB-RuvC complex processes Holliday junction (HJ) DNA during genetic recombination and DNA repair, while the RuvA-RuvB complex plays an important role in the rescue of blocked DNA replication forks via replication fork reversal (RFR). RuvA specifically binds to HJ cruciform DNA, conferring on it an open structure. The RuvB hexamer acts as an ATP-dependent pump, pulling dsDNA into and through the RuvAB complex. HJ branch migration allows RuvC to scan DNA until it finds its consensus sequence, where it cleaves and resolves the cruciform DNA. The chain is Holliday junction branch migration complex subunit RuvA from Pseudomonas syringae pv. syringae (strain B728a).